Here is a 324-residue protein sequence, read N- to C-terminus: Acetaldehyde dehydrogenase 1 (324 aa).

Position 18 to 21 (Ser18 to Ile21) interacts with NAD(+). The active-site Acyl-thioester intermediate is Cys136. Residues Ser167 to Asn175 and Asn297 each bind NAD(+).

It belongs to the acetaldehyde dehydrogenase family.

It carries out the reaction acetaldehyde + NAD(+) + CoA = acetyl-CoA + NADH + H(+). This is Acetaldehyde dehydrogenase 1 from Parafrankia sp. (strain EAN1pec).